The primary structure comprises 118 residues: V-type proton ATPase subunit G 2 (118 aa).

Residues A23–N91 form a disordered region. The span at Q35–F55 shows a compositional bias: basic and acidic residues. Polar residues-rich tracts occupy residues Q56–L69 and R78–Q89.

Belongs to the V-ATPase G subunit family. V-ATPase is a heteromultimeric enzyme made up of two complexes: the ATP-hydrolytic V1 complex and the proton translocation V0 complex. The V1 complex consists of three catalytic AB heterodimers that form a heterohexamer, three peripheral stalks each consisting of EG heterodimers, one central rotor including subunits D and F, and the regulatory subunits C and H. The proton translocation complex V0 consists of the proton transport subunit a, a ring of proteolipid subunits c9c'', rotary subunit d, subunits e and f, and the accessory subunits ATP6AP1/Ac45 and ATP6AP2/PRR.

It is found in the melanosome. It localises to the cytoplasmic vesicle. The protein localises to the clathrin-coated vesicle membrane. Functionally, subunit of the V1 complex of vacuolar(H+)-ATPase (V-ATPase), a multisubunit enzyme composed of a peripheral complex (V1) that hydrolyzes ATP and a membrane integral complex (V0) that translocates protons. V-ATPase is responsible for acidifying and maintaining the pH of intracellular compartments and in some cell types, is targeted to the plasma membrane, where it is responsible for acidifying the extracellular environment. This is V-type proton ATPase subunit G 2 (Atp6v1g2) from Mus musculus (Mouse).